Reading from the N-terminus, the 161-residue chain is Lipid droplet assembly factor 1 (161 aa).

The Cytoplasmic portion of the chain corresponds to 1–43; sequence MAEEEPSSVSRDLQELQRKLGLLLESFQNNSKVVAFMKSPVGR. The chain crosses the membrane as a helical span at residues 44–61; it reads FLDRHPFLVLTVLMFVTM. Topologically, residues 62–67 are lumenal; it reads SAIPVG. Residues 68-87 traverse the membrane as a helical segment; sequence FFLLIVVLTSLGALMGAILL. Over 88 to 93 the chain is Cytoplasmic; that stretch reads EGLVIS. Residues 94–110 traverse the membrane as a helical segment; the sequence is VCGLSLLCILCGLGFVS. Topologically, residues 111–116 are lumenal; that stretch reads LALSGI. Residues 117 to 133 form a helical membrane-spanning segment; it reads TMMSYVVVSCLMSYWFS. The Cytoplasmic segment spans residues 134 to 161; it reads PSRPPTQQHANIDSQLAMKFTESEKLGL.

It belongs to the LDAF1 family. Interacts with BSCL2/seipin to form an oligomeric complex.

It is found in the endoplasmic reticulum membrane. It localises to the lipid droplet. Functionally, plays an important role in the formation of lipid droplets (LD) which are storage organelles at the center of lipid and energy homeostasis. In association with BSCL2/seipin, defines the sites of LD formation in the endoplasmic reticulum. The polypeptide is Lipid droplet assembly factor 1 (Rattus norvegicus (Rat)).